We begin with the raw amino-acid sequence, 421 residues long: ATP-dependent RNA helicase RhlB (421 aa).

Residues 9-37 (QKFSDFALHPKVVEALEKKGFHNCTPIQA) carry the Q motif motif. Residues 40-219 (LPLTLAGRDV…FEQMNNAEYI (180 aa)) form the Helicase ATP-binding domain. 53-60 (AQTGTGKT) contributes to the ATP binding site. Residues 165–168 (DEAD) carry the DEAD box motif. Residues 245–390 (RLLQTLIEEE…VSKYNPDALM (146 aa)) enclose the Helicase C-terminal domain. The tract at residues 392-421 (DLPKPLRLTRPRTGNGPRRTGTPRNRRRSG) is disordered. The segment covering 402–414 (PRTGNGPRRTGTP) has biased composition (low complexity).

Belongs to the DEAD box helicase family. RhlB subfamily. In terms of assembly, component of the RNA degradosome, which is a multiprotein complex involved in RNA processing and mRNA degradation.

It localises to the cytoplasm. The enzyme catalyses ATP + H2O = ADP + phosphate + H(+). Functionally, DEAD-box RNA helicase involved in RNA degradation. Has RNA-dependent ATPase activity and unwinds double-stranded RNA. This chain is ATP-dependent RNA helicase RhlB, found in Escherichia coli O7:K1 (strain IAI39 / ExPEC).